The chain runs to 512 residues: Circadian clock oscillator protein KaiC (512 aa).

KaiC domains follow at residues Met1–Phe243 and Val257–Asp512. 18 residues coordinate ATP: Gly45, Thr46, Gly47, Lys48, Thr49, Ser85, Lys220, Leu221, Arg222, Thr224, His226, Thr286, Gly287, Thr288, Gly289, Lys290, Thr291, and Leu292. Thr49 is a Mg(2+) binding site. Thr291 is a Mg(2+) binding site. Mg(2+) is bound at residue Glu314. Trp327 lines the ATP pocket. A Phosphoserine; by autocatalysis modification is found at Ser427. The residue at position 428 (Thr428) is a Phosphothreonine; by autocatalysis. Positions 447, 453, 454, 455, 457, 459, and 461 each coordinate ATP.

It belongs to the KaiC family. As to quaternary structure, homohexamer; hexamerization is dependent on ATP-binding. The KaiABC complex composition changes during the circadian cycle to control KaiC phosphorylation. Complexes KaiC(6), KaiA(2-4):KaiC(6), KaiB(6):KaiC(6) and KaiC(6):KaiB(6):KaiA(12) are among the most important forms, many form cooperatively. KaiC interacts with SasA, activating its autokinase function and leading to RpaA activation. Mg(2+) is required as a cofactor. In terms of processing, phosphorylated on serine and threonine residues by autocatalysis. Has a 4 step phosphorylation cycle; the autokinase acts first on Thr-428, then Ser-427. When Ser-427 is modified KaiC switches to an autophosphatase mode, acting first on phospho-Thr-428 then phospho-Ser-427.

It carries out the reaction L-seryl-[protein] + ATP = O-phospho-L-seryl-[protein] + ADP + H(+). The catalysed reaction is L-threonyl-[protein] + ATP = O-phospho-L-threonyl-[protein] + ADP + H(+). The enzyme catalyses ATP + H2O = ADP + phosphate + H(+). The interaction with KaiA enhances its phosphorylation status, while the interaction with KaiB decreases it. In terms of biological role, central component of the KaiABC oscillator complex, which constitutes the main circadian regulator in cyanobacteria. Complex composition changes during the circadian cycle to control KaiC phosphorylation. KaiA stimulates KaiC autophosphorylation, while KaiB sequesters KaiA, leading to KaiC autodephosphorylation. Clock output pathways impact the RpaA transcriptional regulator. KaiC enhances the autophosphorylation activity of SasA, which then transfers its phosphate group to RpaA to activate it. KaiB and KaiC together enhance the phospho-RpaA dephosphatase activity of CikA. Functionally, has a weak, temperature-independent ATPase activity; ATPase activity defines the circadian period. The phosphorylation state of KaiC modulates its ATPase activity and effects KaiB binding. The sequence is that of Circadian clock oscillator protein KaiC from Parasynechococcus marenigrum (strain WH8102).